The following is a 313-amino-acid chain: D-alanine--D-alanine ligase (313 aa).

The ATP-grasp domain occupies 104 to 304; that stretch reads KQALVPHGIP…YSDLVEAIIA (201 aa). 130–187 serves as a coordination point for ATP; that stretch reads PLPRPYVLKPVNEGSSVGVAIVTAEGNYGSPISAASKGPWQEFDQLLAEPFIRGRELT. Residues D255, E271, and N273 each contribute to the Mg(2+) site.

The protein belongs to the D-alanine--D-alanine ligase family. It depends on Mg(2+) as a cofactor. Requires Mn(2+) as cofactor.

Its subcellular location is the cytoplasm. The catalysed reaction is 2 D-alanine + ATP = D-alanyl-D-alanine + ADP + phosphate + H(+). Its pathway is cell wall biogenesis; peptidoglycan biosynthesis. In terms of biological role, cell wall formation. The polypeptide is D-alanine--D-alanine ligase (Novosphingobium aromaticivorans (strain ATCC 700278 / DSM 12444 / CCUG 56034 / CIP 105152 / NBRC 16084 / F199)).